Consider the following 619-residue polypeptide: Very-long-chain aldehyde decarbonylase GL1-4 (619 aa).

5 helical membrane-spanning segments follow: residues 45–65, 94–114, 126–146, 178–198, and 325–345; these read IAFSLILPSLLLRMIHNQIWI, GWDDQILFNGLVFYAGYLAMP, GAVVTALVHTGPVEFLYYWFH, FAEHVVYFILFAIPILSTIYL, and AWYMWTLWPLAWLSMVLAWIY. The Fatty acid hydroxylase domain maps to 138–272; sequence VEFLYYWFHR…MPFYDYIYNT (135 aa).

It belongs to the sterol desaturase family. In terms of assembly, homodimer. Expressed ubiquitously at low levels, with higher accumulation in developing panicles, shoots and flag leaves.

The protein localises to the endoplasmic reticulum membrane. It catalyses the reaction a long-chain fatty aldehyde + 2 NADPH + O2 + H(+) = a long-chain alkane + formate + 2 NADP(+) + H2O. Functionally, aldehyde decarbonylase involved in the conversion of aldehydes to alkanes. Core component of a very-long-chain alkane synthesis complex. This is Very-long-chain aldehyde decarbonylase GL1-4 from Oryza sativa subsp. japonica (Rice).